Consider the following 109-residue polypeptide: Putative membrane protein insertion efficiency factor (109 aa).

It belongs to the UPF0161 family.

Its subcellular location is the cell inner membrane. Its function is as follows. Could be involved in insertion of integral membrane proteins into the membrane. This Rhodopseudomonas palustris (strain BisB18) protein is Putative membrane protein insertion efficiency factor.